The sequence spans 427 residues: Acetylornithine aminotransferase (427 aa).

The interval 1–23 (MSLQTLIEQATNPPESGSAASSP) is disordered. Pyridoxal 5'-phosphate contacts are provided by residues 124 to 125 (GA) and Phe-157. Arg-160 contributes to the N(2)-acetyl-L-ornithine binding site. Residue 248-251 (DEVQ) coordinates pyridoxal 5'-phosphate. Position 277 is an N6-(pyridoxal phosphate)lysine (Lys-277). Ser-304 lines the N(2)-acetyl-L-ornithine pocket. Residue Thr-305 coordinates pyridoxal 5'-phosphate.

This sequence belongs to the class-III pyridoxal-phosphate-dependent aminotransferase family. ArgD subfamily. Homodimer. Pyridoxal 5'-phosphate is required as a cofactor.

The protein resides in the cytoplasm. The catalysed reaction is N(2)-acetyl-L-ornithine + 2-oxoglutarate = N-acetyl-L-glutamate 5-semialdehyde + L-glutamate. It functions in the pathway amino-acid biosynthesis; L-arginine biosynthesis; N(2)-acetyl-L-ornithine from L-glutamate: step 4/4. The sequence is that of Acetylornithine aminotransferase from Nostoc sp. (strain PCC 7120 / SAG 25.82 / UTEX 2576).